Consider the following 423-residue polypeptide: Protein MANNAN SYNTHESIS-RELATED 2 (423 aa).

Topologically, residues 1–6 are cytoplasmic; sequence MGVDLR. Residues 7–26 traverse the membrane as a helical; Signal-anchor for type II membrane protein segment; sequence QVVAGILTITMFVMLGQMLH. Over 27–423 the chain is Lumenal; the sequence is RDYFDAVQEK…KNHLAYSCFC (397 aa). 264–266 is a substrate binding site; that stretch reads DLR.

The protein belongs to the glycosyltransferase GT106 family. Widely expressed.

The protein resides in the golgi apparatus membrane. Its pathway is glycan biosynthesis. Functionally, glycosyltransferase involved in mannan biosynthesis. The sequence is that of Protein MANNAN SYNTHESIS-RELATED 2 from Arabidopsis thaliana (Mouse-ear cress).